The sequence spans 494 residues: Cytochrome P450 2A5 (494 aa).

S131 carries the phosphoserine modification. K379 carries the N6-acetyllysine modification. C439 contributes to the heme binding site.

The protein belongs to the cytochrome P450 family. It depends on heme as a cofactor. As to expression, liver, with a strong circadian rhythmicity. Circadian expression is regulated by DBP.

The protein localises to the endoplasmic reticulum membrane. It localises to the microsome membrane. The enzyme catalyses an organic molecule + reduced [NADPH--hemoprotein reductase] + O2 = an alcohol + oxidized [NADPH--hemoprotein reductase] + H2O + H(+). Exhibits a high coumarin 7-hydroxylase activity. The polypeptide is Cytochrome P450 2A5 (Cyp2a5) (Mus musculus (Mouse)).